Consider the following 558-residue polypeptide: Formate--tetrahydrofolate ligase (558 aa).

66–73 (TPAGEGKT) lines the ATP pocket.

Belongs to the formate--tetrahydrofolate ligase family.

It carries out the reaction (6S)-5,6,7,8-tetrahydrofolate + formate + ATP = (6R)-10-formyltetrahydrofolate + ADP + phosphate. The protein operates within one-carbon metabolism; tetrahydrofolate interconversion. The polypeptide is Formate--tetrahydrofolate ligase (Neisseria meningitidis serogroup C (strain 053442)).